The following is a 498-amino-acid chain: GTPase Der (498 aa).

EngA-type G domains are found at residues 3-166 (PVVA…FEEL) and 212-385 (IKFA…RSAT). GTP-binding positions include 9 to 16 (GRPNVGKS), 56 to 60 (DTGGI), 118 to 121 (NKTD), 218 to 225 (GRPNVGKS), 265 to 269 (DTAGV), and 330 to 333 (NKWD). The KH-like domain occupies 386–470 (KRISTSMLTR…PIHIEFQEGD (85 aa)).

It belongs to the TRAFAC class TrmE-Era-EngA-EngB-Septin-like GTPase superfamily. EngA (Der) GTPase family. Associates with the 50S ribosomal subunit.

Functionally, GTPase that plays an essential role in the late steps of ribosome biogenesis. The protein is GTPase Der of Tolumonas auensis (strain DSM 9187 / NBRC 110442 / TA 4).